The sequence spans 184 residues: ATP synthase subunit b, chloroplastic (184 aa).

A helical transmembrane segment spans residues 27–49 (LATNPINLSVVLGVLIFFGKGVL).

Belongs to the ATPase B chain family. F-type ATPases have 2 components, F(1) - the catalytic core - and F(0) - the membrane proton channel. F(1) has five subunits: alpha(3), beta(3), gamma(1), delta(1), epsilon(1). F(0) has four main subunits: a(1), b(1), b'(1) and c(10-14). The alpha and beta chains form an alternating ring which encloses part of the gamma chain. F(1) is attached to F(0) by a central stalk formed by the gamma and epsilon chains, while a peripheral stalk is formed by the delta, b and b' chains.

It is found in the plastid. It localises to the chloroplast thylakoid membrane. In terms of biological role, f(1)F(0) ATP synthase produces ATP from ADP in the presence of a proton or sodium gradient. F-type ATPases consist of two structural domains, F(1) containing the extramembraneous catalytic core and F(0) containing the membrane proton channel, linked together by a central stalk and a peripheral stalk. During catalysis, ATP synthesis in the catalytic domain of F(1) is coupled via a rotary mechanism of the central stalk subunits to proton translocation. Its function is as follows. Component of the F(0) channel, it forms part of the peripheral stalk, linking F(1) to F(0). The chain is ATP synthase subunit b, chloroplastic from Phalaenopsis aphrodite subsp. formosana (Moth orchid).